The chain runs to 398 residues: MRRNSNFSSLETNYLFSSIRQKIRSFREKHPEISIIDLSIGDTTQPLHASVIDTFSTSVRKLGNPKTYRGYGPELGLPALKEKLSEVCYRGKVSPEEIFISDGAKTDIFRLFSLFGPGKTIAVQDPSYPAYIDAAILAGARKIVKLPCTKETDFFPVIPQEENIDIFCLCSPNNPTGTVLNREQLKELIDYANSHGSIILFDAAYSAFISDPSLPTSIFEIPEARFCAIEINSFSKSLGFAGVRLGWNIVPKDLKYSDGSLIIRDWERFLCTTFNGASLPVQEAAIAGASLFPNLEAISKYRYNSSLLREALQKAEFVVHGGEHAPYLWVEVPSMIPDEDFFDFFLYQYHIAITPGKGFGSCGTGYVRFSSLGKSENIVAACQRLSQTSVYDRTVLSL.

Residues Tyr14 and Gly41 each contribute to the substrate site. Pyridoxal 5'-phosphate-binding positions include Tyr71, 104–105 (AK), Tyr128, Asn174, Tyr205, and 233–235 (SFS). Lys105, Tyr128, and Asn174 together coordinate substrate. An N6-(pyridoxal phosphate)lysine modification is found at Lys236. 2 residues coordinate pyridoxal 5'-phosphate: Arg244 and Asn275. Residues Asn275 and Arg368 each coordinate substrate.

This sequence belongs to the class-I pyridoxal-phosphate-dependent aminotransferase family. LL-diaminopimelate aminotransferase subfamily. Homodimer. Pyridoxal 5'-phosphate serves as cofactor.

It catalyses the reaction (2S,6S)-2,6-diaminopimelate + 2-oxoglutarate = (S)-2,3,4,5-tetrahydrodipicolinate + L-glutamate + H2O + H(+). The protein operates within amino-acid biosynthesis; L-lysine biosynthesis via DAP pathway; LL-2,6-diaminopimelate from (S)-tetrahydrodipicolinate (aminotransferase route): step 1/1. Its function is as follows. Involved in the synthesis of meso-diaminopimelate (m-DAP or DL-DAP), required for both lysine and peptidoglycan biosynthesis. Catalyzes the direct conversion of tetrahydrodipicolinate to LL-diaminopimelate. The sequence is that of LL-diaminopimelate aminotransferase from Chlamydia felis (strain Fe/C-56) (Chlamydophila felis).